Consider the following 498-residue polypeptide: Glycerol kinase (498 aa).

Position 12 (T12) interacts with ADP. ATP contacts are provided by T12, T13, and S14. T12 lines the sn-glycerol 3-phosphate pocket. An ADP-binding site is contributed by R16. Positions 82, 83, 134, and 244 each coordinate sn-glycerol 3-phosphate. Glycerol-binding residues include R82, E83, Y134, D244, and Q245. ADP-binding residues include T266 and G310. ATP-binding residues include T266, G310, Q314, and G411. 2 residues coordinate ADP: G411 and N415.

The protein belongs to the FGGY kinase family.

The catalysed reaction is glycerol + ATP = sn-glycerol 3-phosphate + ADP + H(+). Its pathway is polyol metabolism; glycerol degradation via glycerol kinase pathway; sn-glycerol 3-phosphate from glycerol: step 1/1. Its activity is regulated as follows. Inhibited by fructose 1,6-bisphosphate (FBP). Functionally, key enzyme in the regulation of glycerol uptake and metabolism. Catalyzes the phosphorylation of glycerol to yield sn-glycerol 3-phosphate. The polypeptide is Glycerol kinase (Chloroflexus aurantiacus (strain ATCC 29364 / DSM 637 / Y-400-fl)).